The chain runs to 138 residues: MAPK kinase substrate protein At1g80180 (138 aa).

The disordered stretch occupies residues 52–138 (TSEVQDQTTK…RKRPAKRRSR (87 aa)). Residues 69 to 81 (KPIRTDGGMERSR) show a composition bias toward basic and acidic residues. Serine 98 carries the post-translational modification Phosphoserine. The residue at position 105 (serine 105) is a Phosphoserine; by MAPK6. Residues 121-138 (QPGKKVNQRKRPAKRRSR) are compositionally biased toward basic residues.

As to expression, expressed in developing cotyledons, mature cotyledons, cotyledon epidermis and stomata.

May play a role in the regulation of stomata patterning. The chain is MAPK kinase substrate protein At1g80180 from Arabidopsis thaliana (Mouse-ear cress).